Reading from the N-terminus, the 77-residue chain is Acyl carrier protein (77 aa).

Residues 2-77 (SDVADRVKKI…DAVKFISEAS (76 aa)) form the Carrier domain. An O-(pantetheine 4'-phosphoryl)serine modification is found at serine 37.

This sequence belongs to the acyl carrier protein (ACP) family. Post-translationally, 4'-phosphopantetheine is transferred from CoA to a specific serine of apo-ACP by AcpS. This modification is essential for activity because fatty acids are bound in thioester linkage to the sulfhydryl of the prosthetic group.

Its subcellular location is the cytoplasm. The protein operates within lipid metabolism; fatty acid biosynthesis. Functionally, carrier of the growing fatty acid chain in fatty acid biosynthesis. The polypeptide is Acyl carrier protein (Ruegeria pomeroyi (strain ATCC 700808 / DSM 15171 / DSS-3) (Silicibacter pomeroyi)).